Consider the following 183-residue polypeptide: Inosine/xanthosine triphosphatase (183 aa).

It belongs to the YjjX NTPase family. As to quaternary structure, homodimer. Mg(2+) serves as cofactor. It depends on Mn(2+) as a cofactor.

It carries out the reaction XTP + H2O = XDP + phosphate + H(+). It catalyses the reaction ITP + H2O = IDP + phosphate + H(+). Its function is as follows. Phosphatase that hydrolyzes non-canonical purine nucleotides such as XTP and ITP to their respective diphosphate derivatives. Probably excludes non-canonical purines from DNA/RNA precursor pool, thus preventing their incorporation into DNA/RNA and avoiding chromosomal lesions. The protein is Inosine/xanthosine triphosphatase of Vibrio cholerae serotype O1 (strain ATCC 39315 / El Tor Inaba N16961).